A 151-amino-acid polypeptide reads, in one-letter code: MD-2-related lipid-recognition protein (151 aa).

The signal sequence occupies residues 1–18; it reads MAALHWLLLAALLGCTLA. 3 disulfide bridges follow: Cys-27–Cys-141, Cys-45–Cys-51, and Cys-95–Cys-100. A glycan (N-linked (GlcNAc...) asparagine) is linked at Asn-58.

In terms of processing, N-glycosylated. As to expression, hemolymph (at protein level). Constitutively expressed mainly in fat body and also in hemocytes and secreted into hemolymph. Not detected in midgut, epidermis, or Malpighian tubule of naive larvae.

Its subcellular location is the secreted. Its function is as follows. Binds to lipopolysaccharide from a variety of Gram-negative bacteria and to lipid A. In Manduca sexta (Tobacco hawkmoth), this protein is MD-2-related lipid-recognition protein.